An 803-amino-acid chain; its full sequence is MDDLQEIMEDFLIEAFEMNEQLDQDLVELEHNPEDLDLLNRIFRVAHTIKGSSSFLNLNILTHLTHNMEDVLNRARKGEIKITPDIMDVVLRSIDLMKTLLVTIRDTGSDTNNGKENEIEEAVKQLQAITSQNLESAKERTTEAPQKENKEETKEEAKEENKENKAKAPTAENTSSDNPLADEPDLDYANMSAEEVEAEIERLLNKRQEADKERRAQKKQEAKPKQEVTPTKETPKAPKTETKAKAKADTEENKAPSIGVEQTVRVDVRRLDHLMNLIGELVLGKNRLIRIYSDVEERYDGEKFLEELNQVVSSISAVTTDLQLAVMKTRMQPVGKVFNKFPRMVRDLSRELGKSIELIIEGEETELDKSIVEEIGDPLIHIIRNSCDHGIEPLEERRKLNKPETGKVQLSAYNEGNHIVIKISDDGKGLDPVMLKEKAIEKGVISERDAEGMSDREAFNLIFKPGFSTAKVVSNVSGRGVGMDVVKTNIEKLNGIIEIDSEVGVGTTQKLKIPLTLAIIQALLVGVQEEYYAIPLSSVLETVRISQDEIYTVDGKSVLRLRDEVLSLVRLSDIFKVDAILESNSDVYVVIIGLADQKIGVIVDYLIGQEEVVIKSLGYYLKNTRGIAGATVRGDGKITLIVDVGAMMDMAKSIKVNITTLMNESENTKSKNSPSDYIVLAIDDSSTDRAIIRKCLKPLGITLLEATNGLEGLEMLKNGDKIPDAILVDIEMPKMDGYTFASEVRKYNKFKNLPLIAVTSRVTKTDRMRGVESGMTEYITKPYSGEYLTTVVKRSIKLEGDQS.

Position 47 is a phosphohistidine (His47). 2 disordered regions span residues 134-185 and 209-255; these read LESA…DEPD and EADK…ENKA. Basic and acidic residues-rich tracts occupy residues 136–166, 209–226, and 233–254; these read SAKE…ENKA, EADK…KPKQ, and ETPK…EENK. The 248-residue stretch at 270-517 folds into the Histidine kinase domain; it reads RLDHLMNLIG…TQKLKIPLTL (248 aa). Position 273 is a phosphohistidine; by autocatalysis (His273). Residues 519–653 enclose the CheW-like domain; that stretch reads IIQALLVGVQ…VGAMMDMAKS (135 aa). The 119-residue stretch at 678–796 folds into the Response regulatory domain; the sequence is IVLAIDDSST…YLTTVVKRSI (119 aa). Residue Asp729 is modified to 4-aspartylphosphate.

Autophosphorylated.

The enzyme catalyses ATP + protein L-histidine = ADP + protein N-phospho-L-histidine.. Member of the two-component regulatory system CheAY/CheY that regulates chemotaxis and colonization of the gastric mucosa. Functions as a sensor protein kinase which is autophosphorylated at a histidine residue and transfers its phosphate group to the conserved aspartic acid residue in the regulatory domain of CheY. In turn, phosphorylated CheY (CheY-P) interacts with the flagellar motor protein FliM to cause clockwise flagellar rotation and bacterial reversals, as opposed to straight swimming when CheY is not phosphorylated. The chain is Sensor histidine kinase CheAY (cheAY) from Helicobacter pylori (strain ATCC 700392 / 26695) (Campylobacter pylori).